Consider the following 227-residue polypeptide: GRF-interacting factor 1 (227 aa).

Residues 186–227 are disordered; the sequence is RSGSGAKEGSTSLSVDVRGGTSSGAQSGDGEYLKVGTEEEGS.

It belongs to the SS18 family. Interacts with several GRFs. Interacts with GRF10. Interacts with GRF1. In terms of tissue distribution, expressed in shoots, aerial roots, ears and tassels. Expressed in the shoot apical meristem (SAM), young leaf primordia, leaf margins, inflorescence meristem, floral meristem and spikelet meristem.

Functionally, transcription coactivator that plays a role in the regulation of meristematic function in leaves, stems and inflorescences. Regulates shoot architecture and meristem determinacy. Binds to the inflorescence architecture gene UB3 (unbranched3). Regulates the expression of several genes involved in inflorescence architecture. Component of a network formed by the microRNA396 (miRNA396), the GRFs and their interacting factors (GIFs) acting in the regulation of meristem function, at least partially through the control of cell proliferation. Associates with the core SWI/SNF chromatin-remodeling complex and specific GRFs to tightly regulate the transition between cell division and cell expansion in growing leaves. The sequence is that of GRF-interacting factor 1 from Zea mays (Maize).